Here is a 488-residue protein sequence, read N- to C-terminus: Fumarate hydratase (488 aa).

Positions 105, 147, 148, 194, and 195 each coordinate (S)-malate. Catalysis depends on His-195, which acts as the Proton donor/acceptor. The active site involves Ser-340. 3 residues coordinate (S)-malate: Ser-341, Lys-346, and Asn-348.

This sequence belongs to the class-II fumarase/aspartase family. Fumarase subfamily. Homotetramer.

It is found in the cytoplasm. The protein resides in the cytosol. It catalyses the reaction (S)-malate = fumarate + H2O. Catalyzes the reversible stereospecific interconversion of fumarate to L-malate. Fumarate metabolism in the cytosol plays a role during urea cycle and arginine metabolism; fumarate being a by-product of the urea cycle and amino-acid catabolism. The polypeptide is Fumarate hydratase (Schistosoma mansoni (Blood fluke)).